An 876-amino-acid polypeptide reads, in one-letter code: Vacuolar protein sorting-associated protein 39 homolog (876 aa).

Positions 14–310 (GVQIESIAAY…KFLVHADKGT (297 aa)) constitute a CNH domain. Residues 578-741 (ELIEVESLPR…ILIPPTQPLY (164 aa)) form a CHCR repeat.

It belongs to the VAM6/VPS39 family. In terms of assembly, part of the homotypic fusion and vacuole protein sorting (HOPS) complex, composed of Vps16A, car/Vps33A, dor/Vps18, Vps39, Vps11 and lt/Vps41. Interacts with Rab2 (GTP-bound form); the interaction is probably direct.

The protein resides in the cytoplasm. It is found in the lysosome membrane. Its subcellular location is the late endosome membrane. The protein localises to the late endosome. It localises to the lysosome. Part of the homotypic fusion and vacuole protein sorting (HOPS) tethering complex involved in endo-lysosomal vesicle trafficking and lysosome biogenesis. The HOPS complex facilitates docking and fusion of lysosomes with late endosomes and several other types of vesicles. The HOPS complex is also involved in autophagy and crinophagy (the elimination of unused secretory granules through their fusion with lysosomes). The HOPS complex mediates autophagocitic flux, probably by binding autophagosome-associated Syx17/syntaxin 17, promoting assembly of the trans-SNARE complex and instigating autophagosome-lysosome fusion. Independent of Syx17/syntaxin 17, HOPS is involved in biosynthetic transport to lysosomes and lysosome-related organelles such as eye-pigment granules. Required for autophagocytosis-dependent remodeling of myofibrils and transverse-tubules (T-tubules) during metamorphosis. The sequence is that of Vacuolar protein sorting-associated protein 39 homolog from Drosophila melanogaster (Fruit fly).